The chain runs to 297 residues: UDP-N-acetylenolpyruvoylglucosamine reductase (297 aa).

The 174-residue stretch at 22–195 folds into the FAD-binding PCMH-type domain; it reads RVGGPAQYYA…LAGRFRLHRA (174 aa). The active site involves Arg-169. Ser-223 acts as the Proton donor in catalysis. Residue Glu-293 is part of the active site.

This sequence belongs to the MurB family. The cofactor is FAD.

The protein resides in the cytoplasm. The enzyme catalyses UDP-N-acetyl-alpha-D-muramate + NADP(+) = UDP-N-acetyl-3-O-(1-carboxyvinyl)-alpha-D-glucosamine + NADPH + H(+). It participates in cell wall biogenesis; peptidoglycan biosynthesis. Cell wall formation. The protein is UDP-N-acetylenolpyruvoylglucosamine reductase of Chloroflexus aggregans (strain MD-66 / DSM 9485).